A 190-amino-acid polypeptide reads, in one-letter code: Peptidyl-tRNA hydrolase (190 aa).

Tyrosine 14 contacts tRNA. Histidine 19 serves as the catalytic Proton acceptor. TRNA-binding residues include tyrosine 64, asparagine 66, and asparagine 112.

The protein belongs to the PTH family. As to quaternary structure, monomer.

Its subcellular location is the cytoplasm. It catalyses the reaction an N-acyl-L-alpha-aminoacyl-tRNA + H2O = an N-acyl-L-amino acid + a tRNA + H(+). Hydrolyzes ribosome-free peptidyl-tRNAs (with 1 or more amino acids incorporated), which drop off the ribosome during protein synthesis, or as a result of ribosome stalling. Its function is as follows. Catalyzes the release of premature peptidyl moieties from peptidyl-tRNA molecules trapped in stalled 50S ribosomal subunits, and thus maintains levels of free tRNAs and 50S ribosomes. The protein is Peptidyl-tRNA hydrolase of Chlorobium phaeobacteroides (strain DSM 266 / SMG 266 / 2430).